The sequence spans 81 residues: Elsinochrome C biosynthesis cluster protein SNOG_08613 (81 aa).

Part of the gene cluster that mediates the biosynthesis of elsinochrome C, a perelyenequinone phytotoxin structurally similar to cercosporin. The first step of elsinochrome C biosynthesis is performed by the polyketide synthase elcA which catalyzes the formation of nor-toralactone. The starter unit acyltransferase (SAT) domain of elcA initiates polyketide extension by the selective utilization of acetyl-CoA, which is elongated to the heptaketide in the beta-ketoacyl synthase (KS) domain by successive condensations with six malonyl units introduced by the malonyl acyltransferase (MAT) domain. The product template (PT) domain catalyzes C4-C9 and C2-C11 aldol cyclizations and dehydrations to a trihydroxynaphthalene, which is thought to be delivered to the thioesterase (TE) domain for product release. The bifunctional enzyme elcB then methylates nor-toralactone to toralactone before conducting an unusual oxidative aromatic ring opening. The next step in perylenequinone biosynthesis is an O-methylation at the nascent OH-6 of the elcB product performed by the O-methyltransferase elcD. The oxidative coupling of the two monomeric naphthol units in perylenequinone biosynthesis is catalyzed by the FAD-dependent monooxygenase elcE and the multicopper oxidase elcG. ElcG might catalyze the first intermolecular coupling in a regio- and stereo-selective manner via a phenol radical coupling mechanism and the elcE could forge the second C-C bond intramolecularly via a hydride transfer mechanism. The fasciclin domain-containing protein elcF might also play a role duting this step. The last piece of the puzzle in the biosynthesis of elsinochrome C is the additional annulation by enolate coupling to afford the dihydrobenzo(ghi)perylenequinone system, catalyzed by the FAD-dependent monooxygenase elcH. This chain is Elsinochrome C biosynthesis cluster protein SNOG_08613, found in Phaeosphaeria nodorum (strain SN15 / ATCC MYA-4574 / FGSC 10173) (Glume blotch fungus).